Consider the following 362-residue polypeptide: sn-glycerol-3-phosphate import ATP-binding protein UgpC (362 aa).

The ABC transporter domain maps to 4–235; that stretch reads LSFRNVKKTY…PASTFVAGFI (232 aa). 37–44 lines the ATP pocket; the sequence is GPSGCGKS.

It belongs to the ABC transporter superfamily. sn-glycerol-3-phosphate importer (TC 3.A.1.1.3) family. In terms of assembly, the complex is composed of two ATP-binding proteins (UgpC), two transmembrane proteins (UgpA and UgpE) and a solute-binding protein (UgpB).

It is found in the cell inner membrane. It carries out the reaction sn-glycerol 3-phosphate(out) + ATP + H2O = sn-glycerol 3-phosphate(in) + ADP + phosphate + H(+). Part of the ABC transporter complex UgpBAEC involved in sn-glycerol-3-phosphate (G3P) import. Responsible for energy coupling to the transport system. The chain is sn-glycerol-3-phosphate import ATP-binding protein UgpC from Bordetella bronchiseptica (strain ATCC BAA-588 / NCTC 13252 / RB50) (Alcaligenes bronchisepticus).